The sequence spans 336 residues: Growth hormone-regulated TBC protein 1 (336 aa).

Positions 68 to 258 constitute a Rab-GAP TBC domain; sequence GVPLEHRARV…RIWDCLFNEG (191 aa).

Its function is as follows. May act as a GTPase-activating protein for Rab family protein(s). The protein is Growth hormone-regulated TBC protein 1 (GRTP1) of Homo sapiens (Human).